Reading from the N-terminus, the 84-residue chain is MENIITATIFGSVILLAVAALATAIGFSLLGGKFLESSARQPELAASLQTKMFIVAGLLDAISMIAVGIALLFIFANPFIGLLN.

Transmembrane regions (helical) follow at residues 9–29 and 54–74; these read IFGSVILLAVAALATAIGFSL and IVAGLLDAISMIAVGIALLFI.

It belongs to the ATPase C chain family. In terms of assembly, F-type ATPases have 2 components, F(1) - the catalytic core - and F(0) - the membrane proton channel. F(1) has five subunits: alpha(3), beta(3), gamma(1), delta(1), epsilon(1). F(0) has three main subunits: a(1), b(2) and c(10-14). The alpha and beta chains form an alternating ring which encloses part of the gamma chain. F(1) is attached to F(0) by a central stalk formed by the gamma and epsilon chains, while a peripheral stalk is formed by the delta and b chains.

The protein resides in the cell inner membrane. Its function is as follows. F(1)F(0) ATP synthase produces ATP from ADP in the presence of a proton or sodium gradient. F-type ATPases consist of two structural domains, F(1) containing the extramembraneous catalytic core and F(0) containing the membrane proton channel, linked together by a central stalk and a peripheral stalk. During catalysis, ATP synthesis in the catalytic domain of F(1) is coupled via a rotary mechanism of the central stalk subunits to proton translocation. In terms of biological role, key component of the F(0) channel; it plays a direct role in translocation across the membrane. A homomeric c-ring of between 10-14 subunits forms the central stalk rotor element with the F(1) delta and epsilon subunits. The sequence is that of ATP synthase subunit c from Histophilus somni (strain 129Pt) (Haemophilus somnus).